The sequence spans 479 residues: MSPQTETKASVGFKAGVKEYKLTYYTPEYETKDTDILAAFRVTPQPGVPPEEAGAAVAAESSTGTWTTVWTDGLTSLDRYKGRCYHIEPVPGEETQFIAYVAYPLDLFEEGSVTNMFTSIVGNVFGFKALAALRLEDLRIPPAYTKTFQGPPHGIQVERDKLNKYGRPLLGCTIKPKLGLSAKNYGRAVYECLRGGLDFTKDDENVNSQPFMRWRDRFLFCAEAIYKSQAETGEIKGHYLNATAGTCEEMIKRAVFARELGVPIVMHDYLTGGFTANTSLSHYCRDNGLLLHIHRAMHAVIDRQKNHGMHFRVLAKALRLSGGDHIHAGTVVGKLEGDRESTLGFVDLLRDDYVEKDRSRGIFFTQDWVSLPGVLPVASGGIHVWHMPALTEIFGDDSVLQFGGGTLGHPWGNAPGAVANRVALEACVQARNEGRDLAVEGNEIIREACKWSPELAAACEVWKEIRFNFPTIDKLDGQA.

A propeptide spanning residues M1–S2 is cleaved from the precursor. Substrate contacts are provided by N123 and T173. K175 (proton acceptor) is an active-site residue. K177 serves as a coordination point for substrate. Mg(2+) is bound by residues K201, D203, and E204. K201 carries the N6-carboxylysine modification. S208 is subject to Phosphoserine. Residue H294 is the Proton acceptor of the active site. 2 residues coordinate substrate: R295 and H327. At T330 the chain carries Phosphothreonine. Substrate is bound at residue S379.

It belongs to the RuBisCO large chain family. Type I subfamily. In terms of assembly, heterohexadecamer of 8 large chains and 8 small chains; disulfide-linked. The disulfide link is formed within the large subunit homodimers. Requires Mg(2+) as cofactor. Post-translationally, the disulfide bond which can form in the large chain dimeric partners within the hexadecamer appears to be associated with oxidative stress and protein turnover.

The protein resides in the plastid. It is found in the chloroplast. The enzyme catalyses 2 (2R)-3-phosphoglycerate + 2 H(+) = D-ribulose 1,5-bisphosphate + CO2 + H2O. It catalyses the reaction D-ribulose 1,5-bisphosphate + O2 = 2-phosphoglycolate + (2R)-3-phosphoglycerate + 2 H(+). Its function is as follows. RuBisCO catalyzes two reactions: the carboxylation of D-ribulose 1,5-bisphosphate, the primary event in carbon dioxide fixation, as well as the oxidative fragmentation of the pentose substrate in the photorespiration process. Both reactions occur simultaneously and in competition at the same active site. The sequence is that of Ribulose bisphosphate carboxylase large chain from Draba nemorosa (Woodland whitlowgrass).